A 2234-amino-acid chain; its full sequence is RNA-directed RNA polymerase L (2234 aa).

Residues 26-283 (ITVVTSQTEM…INLSDEKLSC (258 aa)) are endonuclease. Glu51, Asp89, and Glu102 together coordinate Mn(2+). Lys115 is a catalytic residue. Positions 879–891 (KRDDHMKDSEDSK) are enriched in basic and acidic residues. Disordered regions lie at residues 879–898 (KRDD…SSDL) and 927–949 (KLKE…QQKR). Residues 935 to 945 (RQSSSGSSLKN) show a composition bias toward polar residues. Residues 1184 to 1383 (MEMKMSVNLG…FISSKFNKFV (200 aa)) enclose the RdRp catalytic domain. Position 1342 (Asp1342) interacts with Mg(2+).

The protein belongs to the Bunyavirales RNA polymerase family. In terms of assembly, homomultimer; the oligomeric structure is essential for the polymerase activity. Interacts with nucleoprotein N. Interacts with protein Z; this interaction inhibits viral transcription and replication, Z partially blocks the product exit tunnel for the releasing nascent RNA product. The cofactor is Mn(2+). It depends on Mg(2+) as a cofactor.

It is found in the virion. The protein localises to the host cytoplasm. It catalyses the reaction RNA(n) + a ribonucleoside 5'-triphosphate = RNA(n+1) + diphosphate. RNA-dependent RNA polymerase, which is responsible for the replication and transcription of the viral RNA genome using antigenomic RNA as an intermediate. During transcription, synthesizes subgenomic RNAs and assures their capping by a cap-snatching mechanism, which involves the endonuclease activity cleaving the host capped pre-mRNAs. These short capped RNAs are then used as primers for viral transcription. The 3'-end of subgenomic mRNAs molecules are heterogeneous and not polyadenylated. The replicase function is to direct synthesis of antigenomic and genomic RNA which are encapsidated and non capped. As a consequence of the use of the same enzyme for both transcription and replication, these mechanisms need to be well coordinated. These processes may be regulated by proteins N and Z in a dose-dependent manner. Z protein inhibits the viral polymerase L und thus the viral transcription and RNA synthesis. The protein is RNA-directed RNA polymerase L of Bolomys (OLVV).